A 342-amino-acid chain; its full sequence is S-adenosylmethionine:tRNA ribosyltransferase-isomerase (342 aa).

The protein belongs to the QueA family. In terms of assembly, monomer.

The protein resides in the cytoplasm. It catalyses the reaction 7-aminomethyl-7-carbaguanosine(34) in tRNA + S-adenosyl-L-methionine = epoxyqueuosine(34) in tRNA + adenine + L-methionine + 2 H(+). It functions in the pathway tRNA modification; tRNA-queuosine biosynthesis. Its function is as follows. Transfers and isomerizes the ribose moiety from AdoMet to the 7-aminomethyl group of 7-deazaguanine (preQ1-tRNA) to give epoxyqueuosine (oQ-tRNA). This chain is S-adenosylmethionine:tRNA ribosyltransferase-isomerase, found in Streptococcus mutans serotype c (strain ATCC 700610 / UA159).